Here is a 181-residue protein sequence, read N- to C-terminus: MGIPMRKPLLVLLVFLALASCCYAAYRPSETLCGGELVDTLQFVCGDRGFYFSRPASRVNRRSRGIVEECCFRSCDLALLETYCATPAKSERDVSTPPTVLPDNFPRYPVGKFFRYDTWKQSAQRLRRGLPALLRARRGRTLAKELEAVREAKRHRPLTARPTRDPAAHGGASPEASGHRK.

An N-terminal signal peptide occupies residues 1-24; it reads MGIPMRKPLLVLLVFLALASCCYA. A b region spans residues 25–52; sequence AYRPSETLCGGELVDTLQFVCGDRGFYF. 3 cysteine pairs are disulfide-bonded: C33/C71, C45/C84, and C70/C75. The segment at 53–64 is c; sequence SRPASRVNRRSR. The segment at 65–85 is a; the sequence is GIVEECCFRSCDLALLETYCA. A d region spans residues 86-91; that stretch reads TPAKSE. Positions 92-181 are cleaved as a propeptide — e peptide; the sequence is RDVSTPPTVL…ASPEASGHRK (90 aa). Positions 151 to 181 are disordered; it reads EAKRHRPLTARPTRDPAAHGGASPEASGHRK. T163 carries O-linked (GalNAc...) threonine glycosylation.

This sequence belongs to the insulin family. In terms of assembly, interacts with MYORG; this interaction is required for IGF2 secretion. Interacts with integrins ITGAV:ITGB3 and ITGA6:ITGB4; integrin-binding is required for IGF2 signaling. Interacts with IGFBP2. Post-translationally, proteolytically processed by PCSK4, proIGF2 is cleaved at Arg-128 and Arg-92 to generate big-IGF2 and mature IGF2.

The protein localises to the secreted. Functionally, the insulin-like growth factors possess growth-promoting activity. Major fetal growth hormone in mammals. Plays a key role in regulating fetoplacental development. IGF2 is influenced by placental lactogen. Also involved in tissue differentiation. In adults, involved in glucose metabolism in adipose tissue, skeletal muscle and liver. Acts as a ligand for integrin which is required for IGF2 signaling. Positively regulates myogenic transcription factor MYOD1 function by facilitating the recruitment of transcriptional coactivators, thereby controlling muscle terminal differentiation. Inhibits myoblast differentiation and modulates metabolism via increasing the mitochondrial respiration rate. In terms of biological role, preptin undergoes glucose-mediated co-secretion with insulin, and acts as a physiological amplifier of glucose-mediated insulin secretion. Exhibits osteogenic properties by increasing osteoblast mitogenic activity through phosphoactivation of MAPK1 and MAPK3. The protein is Insulin-like growth factor 2 of Sus scrofa (Pig).